A 160-amino-acid chain; its full sequence is Small ribosomal subunit protein uS19 (160 aa).

The tract at residues methionine 1–arginine 27 is disordered.

The protein belongs to the universal ribosomal protein uS19 family.

Protein S19 forms a complex with S13 that binds strongly to the 16S ribosomal RNA. This is Small ribosomal subunit protein uS19 from Methanococcus vannielii (strain ATCC 35089 / DSM 1224 / JCM 13029 / OCM 148 / SB).